We begin with the raw amino-acid sequence, 432 residues long: Glutamine synthetase, chloroplastic (432 aa).

The GS beta-grasp domain occupies 79 to 159 (IIAEYIWIGG…VICDTYTPQG (81 aa)). Residues 166–432 (KRHKAAQIFS…LAAQKLSLNV (267 aa)) form the GS catalytic domain.

This sequence belongs to the glutamine synthetase family. In terms of assembly, homooctamer.

The protein resides in the plastid. It is found in the chloroplast. It carries out the reaction L-glutamate + NH4(+) + ATP = L-glutamine + ADP + phosphate + H(+). The light-modulated chloroplast enzyme, encoded by a nuclear gene and expressed primarily in leaves, is responsible for the reassimilation of the ammonia generated by photorespiration. The sequence is that of Glutamine synthetase, chloroplastic (GLN2) from Daucus carota (Wild carrot).